Here is a 304-residue protein sequence, read N- to C-terminus: MWFKNLTLYRFNKPFSIETEALETALADFTFSPCGSQDVSKFGFSNALGKQGSTLVHSANNRHLICVTKEEKILPGQVIKESLEEKVALIEDEENRKLAKKEKDALKDEIITSLLPRAFSRRSQTRALILPELEMILVDSSSATKAEELLALLRKALGSLPVIPLSFKAPVESNLTQWLKDGSAPLPFEMQDEAELKSAADEGGIVRFKQQDLKEDEVLAHLETGKEVHKLALHFGQSIALLLQSDASVKRLKFSEEFRAGNDELGNEDPMARLDADFALMGSELVALMHALVSALGGLEETQA.

This sequence belongs to the RdgC family.

The protein localises to the cytoplasm. Its subcellular location is the nucleoid. May be involved in recombination. The protein is Recombination-associated protein RdgC of Shewanella sp. (strain MR-4).